We begin with the raw amino-acid sequence, 64 residues long: Alpha-conotoxin-like Ac1.1b (64 aa).

The first 21 residues, 1 to 21, serve as a signal peptide directing secretion; sequence MGMRMMFTLFLLVVLTTTVVS. Positions 22-47 are excised as a propeptide; sequence FPSDSASDGRDDEAKDERSDMYKSKR. Residues 23–46 form a disordered region; it reads PSDSASDGRDDEAKDERSDMYKSK. Residues 28–44 show a composition bias toward basic and acidic residues; the sequence is SDGRDDEAKDERSDMYK. 2 cysteine pairs are disulfide-bonded: C51–C56 and C52–C62. C62 is modified (cysteine amide).

It belongs to the conotoxin A superfamily. In terms of tissue distribution, expressed by the venom duct.

It is found in the secreted. Its function is as follows. Alpha-conotoxins act on postsynaptic membranes, they bind to the nicotinic acetylcholine receptors (nAChR) and thus inhibit them. This chain is Alpha-conotoxin-like Ac1.1b, found in Conus achatinus (Little frog cone).